The chain runs to 276 residues: Phosphatidylcholine synthase (276 aa).

Over 1-30 the chain is Cytoplasmic; the sequence is MGGQKEMADSVKTKLTGKLKAKKVTAPQAK. Residues 31–51 form a helical membrane-spanning segment; the sequence is AFSVHLLTASGSFLAFLSVVA. The Periplasmic portion of the chain corresponds to 52–57; sequence ASDGRY. Residues 58–78 traverse the membrane as a helical segment; it reads TAMWWWLGLALFVDGIDGPIA. Topologically, residues 79–91 are cytoplasmic; the sequence is RKLEVKYVLPNWS. Residues 92 to 112 form a helical membrane-spanning segment; the sequence is GELLDSIIDYVTYVLIPAFAL. Residues 113 to 115 lie on the Periplasmic side of the membrane; it reads YQS. Residues 116 to 136 traverse the membrane as a helical segment; that stretch reads GFMGTNLSFISGAIIVVSSAI. Residues 137-146 are Cytoplasmic-facing; that stretch reads YYADTGMKTK. The chain crosses the membrane as a helical span at residues 147-167; the sequence is ENFFKGFPVVWNMVVFTLFIV. Residues 168 to 171 lie on the Periplasmic side of the membrane; that stretch reads RPGE. The chain crosses the membrane as a helical span at residues 172–192; sequence WVAFGTVVASAILSFLPINFL. Over 193–202 the chain is Cytoplasmic; sequence HPVRVVRLRP. Residues 203-223 form a helical membrane-spanning segment; that stretch reads LNLTIFLLWCAFGVIALYYML. At 224–230 the chain is on the periplasmic side; the sequence is DAPLWVR. A helical transmembrane segment spans residues 231-251; sequence IGISVTGLYIYFIGAIMQLFP. Topologically, residues 252–276 are cytoplasmic; it reads SLGREAALAKARKLVEKQQKSGEAP.

It belongs to the CDP-alcohol phosphatidyltransferase class-I family. The cofactor is Mn(2+).

The protein localises to the cell inner membrane. The catalysed reaction is a CDP-1,2-diacyl-sn-glycerol + choline = a 1,2-diacyl-sn-glycero-3-phosphocholine + CMP + H(+). Condenses choline with CDP-diglyceride to produce phosphatidylcholine and CMP. This chain is Phosphatidylcholine synthase, found in Brucella melitensis biotype 1 (strain ATCC 23456 / CCUG 17765 / NCTC 10094 / 16M).